Consider the following 461-residue polypeptide: PE-PGRS family protein PE_PGRS45 (461 aa).

Residues 4-92 (VNVAPQLVST…GSTYAVAEAA (89 aa)) form the PE domain. 2 disordered regions span residues 232–251 (GGAGGTGGGEPSAGASGGNG) and 426–461 (AGSLFNGAPGFGGPGGSGGASLLGPPGLAGTNGADG). A compositionally biased stretch (gly residues) spans 434-446 (PGFGGPGGSGGAS).

Belongs to the mycobacterial PE family. PGRS subfamily. In terms of assembly, interacts with human TIMM23, which is part of a complex that mediates the translocation of transit peptide-containing proteins across the mitochondrial inner membrane.

It localises to the cell membrane. The protein resides in the secreted. Its subcellular location is the cell wall. It is found in the host mitochondrion. It catalyses the reaction hexadecanal + NADP(+) + CoA = hexadecanoyl-CoA + NADPH + H(+). Oxidoreductase activity is inhibited by the first line anti-tubercular drug isoniazid (INH). Functionally, may be an effector protein that contributes to pathogenesis by targeting host mitochondria, where it modulates host cellular processes. In THP1 macrophages, increases the ADP-to-ATP ratio and increases the cellular ROS levels. Also induces mitochondrial perturbations through membrane depolarization, release of mitochondrial superoxide, up-regulation of expression of host proapoptotic proteins (BAX and BIM) and release of cytochrome C into the cytosol. May bind calcium to increase intracellular calcium influx, which may further lead to mitochondrial perturbations. Mitochondrial perturbations and alteration of Ca(2+) influx are independent but simultaneous events. In terms of biological role, in vitro, shows NADPH-dependent fatty acyl coenzyme A oxidoreductase activity. Can oxidize palmitoyl-CoA, but not glutathione and thiourea. This is PE-PGRS family protein PE_PGRS45 from Mycobacterium tuberculosis (strain ATCC 25618 / H37Rv).